The chain runs to 191 residues: uncharacterized protein (191 aa).

This is an uncharacterized protein from Archaeoglobus fulgidus (strain ATCC 49558 / DSM 4304 / JCM 9628 / NBRC 100126 / VC-16).